Consider the following 558-residue polypeptide: Dihydroxy-acid dehydratase (558 aa).

Position 81 (aspartate 81) interacts with Mg(2+). Cysteine 122 is a binding site for [2Fe-2S] cluster. Mg(2+) is bound by residues aspartate 123 and lysine 124. N6-carboxylysine is present on lysine 124. Cysteine 195 provides a ligand contact to [2Fe-2S] cluster. Glutamate 447 serves as a coordination point for Mg(2+). Residue serine 473 is the Proton acceptor of the active site.

It belongs to the IlvD/Edd family. As to quaternary structure, homodimer. [2Fe-2S] cluster is required as a cofactor. Requires Mg(2+) as cofactor.

The catalysed reaction is (2R)-2,3-dihydroxy-3-methylbutanoate = 3-methyl-2-oxobutanoate + H2O. The enzyme catalyses (2R,3R)-2,3-dihydroxy-3-methylpentanoate = (S)-3-methyl-2-oxopentanoate + H2O. It participates in amino-acid biosynthesis; L-isoleucine biosynthesis; L-isoleucine from 2-oxobutanoate: step 3/4. The protein operates within amino-acid biosynthesis; L-valine biosynthesis; L-valine from pyruvate: step 3/4. Functions in the biosynthesis of branched-chain amino acids. Catalyzes the dehydration of (2R,3R)-2,3-dihydroxy-3-methylpentanoate (2,3-dihydroxy-3-methylvalerate) into 2-oxo-3-methylpentanoate (2-oxo-3-methylvalerate) and of (2R)-2,3-dihydroxy-3-methylbutanoate (2,3-dihydroxyisovalerate) into 2-oxo-3-methylbutanoate (2-oxoisovalerate), the penultimate precursor to L-isoleucine and L-valine, respectively. This Bacillus velezensis (strain DSM 23117 / BGSC 10A6 / LMG 26770 / FZB42) (Bacillus amyloliquefaciens subsp. plantarum) protein is Dihydroxy-acid dehydratase.